A 396-amino-acid chain; its full sequence is Tyrosine--tRNA ligase (396 aa).

Positions 39–48 match the 'HIGH' region motif; the sequence is PTAPDLHLGH. Positions 223-227 match the 'KMSKS' region motif; the sequence is KMSKS. Lysine 226 is a binding site for ATP. In terms of domain architecture, S4 RNA-binding spans 334-395; sequence LPVPQLLKQA…GKRKFARVTV (62 aa).

Belongs to the class-I aminoacyl-tRNA synthetase family. TyrS type 2 subfamily. As to quaternary structure, homodimer.

Its subcellular location is the cytoplasm. It carries out the reaction tRNA(Tyr) + L-tyrosine + ATP = L-tyrosyl-tRNA(Tyr) + AMP + diphosphate + H(+). Functionally, catalyzes the attachment of tyrosine to tRNA(Tyr) in a two-step reaction: tyrosine is first activated by ATP to form Tyr-AMP and then transferred to the acceptor end of tRNA(Tyr). This Thiobacillus denitrificans (strain ATCC 25259 / T1) protein is Tyrosine--tRNA ligase.